Reading from the N-terminus, the 552-residue chain is Protein TRM32 (552 aa).

Residues 295-379 form a disordered region; that stretch reads TDLPRDSSTS…NKTAEKTETL (85 aa). The span at 331 to 351 shows a compositional bias: basic and acidic residues; that stretch reads VRAEKEEKYEVQEERSQENHL. The span at 352–371 shows a compositional bias: polar residues; the sequence is DSSNQRILQQEPDSVPSTNK.

The polypeptide is Protein TRM32 (TRM32) (Arabidopsis thaliana (Mouse-ear cress)).